A 720-amino-acid chain; its full sequence is Engulfment and cell motility protein 3 (720 aa).

Residues glutamate 307–leucine 479 form the ELMO domain. Positions arginine 542 to serine 664 constitute a PH domain. The SH3-binding motif lies at proline 696 to proline 706.

As to quaternary structure, probably interacts directly with the SH3-domain of DOCK1 via its SH3-binding site. Part of a complex with DOCK1 and RAC1. Interacts with ADGRB3.

The protein resides in the cytoplasm. Involved in cytoskeletal rearrangements required for phagocytosis of apoptotic cells and cell motility. Acts in association with DOCK1 and CRK. Was initially proposed to be required in complex with DOCK1 to activate Rac Rho small GTPases. May enhance the guanine nucleotide exchange factor (GEF) activity of DOCK1. The sequence is that of Engulfment and cell motility protein 3 (Elmo3) from Mus musculus (Mouse).